The chain runs to 145 residues: U20-hexatoxin-Hi1a (145 aa).

The first 16 residues, 1–16 (MYQFLIIVILAAFVNG), serve as a signal peptide directing secretion. 2 Thyroglobulin type-1 domains span residues 20-73 (KTEC…GQPM) and 82-145 (ACEC…RLEC). Intrachain disulfides connect cysteine 23/cysteine 45, cysteine 56/cysteine 63, cysteine 85/cysteine 106, cysteine 117/cysteine 124, and cysteine 126/cysteine 145.

Expressed by the venom gland.

Its subcellular location is the secreted. In terms of biological role, cysteine proteinase inhibitor. This Hadronyche infensa (Fraser island funnel-web spider) protein is U20-hexatoxin-Hi1a.